The sequence spans 1076 residues: DNA-directed RNA polymerase subunit beta (1076 aa).

The protein belongs to the RNA polymerase beta chain family. As to quaternary structure, in plastids the minimal PEP RNA polymerase catalytic core is composed of four subunits: alpha, beta, beta', and beta''. When a (nuclear-encoded) sigma factor is associated with the core the holoenzyme is formed, which can initiate transcription.

It localises to the plastid. The protein localises to the chloroplast. The catalysed reaction is RNA(n) + a ribonucleoside 5'-triphosphate = RNA(n+1) + diphosphate. In terms of biological role, DNA-dependent RNA polymerase catalyzes the transcription of DNA into RNA using the four ribonucleoside triphosphates as substrates. This is DNA-directed RNA polymerase subunit beta from Lolium perenne (Perennial ryegrass).